The sequence spans 586 residues: Probable lysosomal cobalamin transporter (586 aa).

9 helical membrane-spanning segments follow: residues 10–30, 47–67, 96–116, 147–167, 191–211, 315–335, 378–398, 420–440, and 509–529; these read IWIA…VTTF, VVSL…IALV, IVYY…IPFA, SGFI…PAAG, ALTF…VLYT, LVGG…MLIT, IIMA…LATV, ILIA…SIAM, and VFGA…LIVL. An N-linked (GlcNAc...) asparagine glycan is attached at Asn-540.

Belongs to the LIMR family. LMBRD1 subfamily.

The protein localises to the lysosome membrane. Probable lysosomal cobalamin transporter. Required to export cobalamin from lysosomes allowing its conversion to cofactors. This is Probable lysosomal cobalamin transporter from Pyricularia oryzae (strain 70-15 / ATCC MYA-4617 / FGSC 8958) (Rice blast fungus).